A 388-amino-acid chain; its full sequence is S-adenosylmethionine synthase (388 aa).

Histidine 17 lines the ATP pocket. Mg(2+) is bound at residue aspartate 19. Glutamate 45 is a K(+) binding site. Glutamate 58 and glutamine 102 together coordinate L-methionine. Residues 102–112 (QSVHIAQGVDA) form a flexible loop region. ATP-binding positions include 167–169 (DAK), aspartate 241, 247–248 (RK), alanine 264, and lysine 268. Aspartate 241 serves as a coordination point for L-methionine. An L-methionine-binding site is contributed by lysine 272.

This sequence belongs to the AdoMet synthase family. In terms of assembly, homotetramer; dimer of dimers. Mg(2+) is required as a cofactor. K(+) serves as cofactor.

It localises to the cytoplasm. It carries out the reaction L-methionine + ATP + H2O = S-adenosyl-L-methionine + phosphate + diphosphate. It functions in the pathway amino-acid biosynthesis; S-adenosyl-L-methionine biosynthesis; S-adenosyl-L-methionine from L-methionine: step 1/1. Functionally, catalyzes the formation of S-adenosylmethionine (AdoMet) from methionine and ATP. The overall synthetic reaction is composed of two sequential steps, AdoMet formation and the subsequent tripolyphosphate hydrolysis which occurs prior to release of AdoMet from the enzyme. The polypeptide is S-adenosylmethionine synthase (Maricaulis maris (strain MCS10) (Caulobacter maris)).